Here is a 212-residue protein sequence, read N- to C-terminus: Uridine kinase (212 aa).

13–20 (GASASGKS) is a binding site for ATP.

This sequence belongs to the uridine kinase family.

It is found in the cytoplasm. It catalyses the reaction uridine + ATP = UMP + ADP + H(+). The enzyme catalyses cytidine + ATP = CMP + ADP + H(+). The protein operates within pyrimidine metabolism; CTP biosynthesis via salvage pathway; CTP from cytidine: step 1/3. It participates in pyrimidine metabolism; UMP biosynthesis via salvage pathway; UMP from uridine: step 1/1. The protein is Uridine kinase of Shewanella amazonensis (strain ATCC BAA-1098 / SB2B).